The sequence spans 983 residues: Serine/threonine-protein kinase N2 (983 aa).

Positions K33–V109 constitute an REM-1 1 domain. The residue at position 77 (K77) is an N6-acetyllysine. A disordered region spans residues I107–N135. S110 is subject to Phosphoserine. Phosphothreonine occurs at positions 121 and 124. The segment covering T121–N135 has biased composition (low complexity). 2 consecutive REM-1 domains span residues T121–L203 and A204–R284. A phosphoserine mark is found at S301, S305, S359, and S361. The interval T351–L382 is disordered. Residues S352 to F472 enclose the C2 domain. Residues R364–R380 are compositionally biased toward low complexity. Positions N381–C462 are necessary to rescue apical junction formation. Phosphoserine occurs at positions 534, 582, 619, and 630. The interval L553–E588 is disordered. A Protein kinase domain is found at F656–F915. Residues L662–V670 and K685 contribute to the ATP site. The Proton acceptor role is filled by D781. T815 is subject to Phosphothreonine; by PDPK1. Residues R916 to F976 form a necessary for the catalytic activity region. An AGC-kinase C-terminal domain is found at R916–C983. Residue S951 is modified to Phosphoserine. A Phosphothreonine modification is found at T957. The tract at residues D977–C983 is negatively regulates the responsiveness of the catalytic activity by cardiolipin and is required for optimal activation by the GTP-bound RhoA.

It belongs to the protein kinase superfamily. AGC Ser/Thr protein kinase family. PKC subfamily. In terms of assembly, interacts (via the REM repeats) with RHOA (GTP-bound form preferentially) and interacts (via the REM repeats) with RAC1 (GTP-bound form preferentially); the interactions induce its autophosphorylation. Interacts with NCK1 (via SH3 domains). Interacts with RHOC. Interacts with NCK1 and NCK2. Interacts with CD44. Interacts (via C-terminal kinase domain) with PDPK1; the interaction stimulates PDPK1 kinase activity. Interacts with MAP3K2; the interaction activates PRK2 kinase activity in a MAP3K2-independent kinase activity. Interacts (via C-terminal domain) with AKT1; the interaction occurs with the C-terminal cleavage product of PRK2 in apoptotic cells. Interacts (via C-terminus) with PTPN13 (via PDZ 3 domain). Interacts with CDK10. Phosphorylated during mitosis. Autophosphorylated. Phosphorylated. Phosphorylated by CDK10. Post-translationally, activated by limited proteolysis with trypsin. Proteolytically cleaved by caspase-3 during the induction of apoptotic cell death. As to expression, ubiquitous. Highly expressed in liver and lung Expressed in astrocytes (at protein level). Ubiquitous.

It localises to the cytoplasm. Its subcellular location is the nucleus. It is found in the membrane. The protein resides in the cell projection. The protein localises to the lamellipodium. It localises to the cytoskeleton. Its subcellular location is the cleavage furrow. It is found in the midbody. The protein resides in the cell junction. The enzyme catalyses L-seryl-[protein] + ATP = O-phospho-L-seryl-[protein] + ADP + H(+). The catalysed reaction is L-threonyl-[protein] + ATP = O-phospho-L-threonyl-[protein] + ADP + H(+). Its activity is regulated as follows. Kinase activity is activated upon binding to GTP-bound Rho1/Rac1 GTPases. Activated by caspase-3 (CASP3) cleavage during apoptosis. Activated by lipids, particularly cardiolipin and to a lesser extent by other acidic phospholipids and unsaturated fatty acids. Two specific sites, Thr-815 (activation loop of the kinase domain) and Thr-957 (turn motif), need to be phosphorylated for its full activation. Functionally, PKC-related serine/threonine-protein kinase and Rho/Rac effector protein that participates in specific signal transduction responses in the cell. Plays a role in the regulation of cell cycle progression, actin cytoskeleton assembly, cell migration, cell adhesion, tumor cell invasion and transcription activation signaling processes. Phosphorylates CTTN in hyaluronan-induced astrocytes and hence decreases CTTN ability to associate with filamentous actin. Phosphorylates HDAC5, therefore lead to impair HDAC5 import. Direct RhoA target required for the regulation of the maturation of primordial junctions into apical junction formation in bronchial epithelial cells. Required for G2/M phases of the cell cycle progression and abscission during cytokinesis in a ECT2-dependent manner. Stimulates FYN kinase activity that is required for establishment of skin cell-cell adhesion during keratinocytes differentiation. Regulates epithelial bladder cells speed and direction of movement during cell migration and tumor cell invasion. Inhibits Akt pro-survival-induced kinase activity. Mediates Rho protein-induced transcriptional activation via the c-fos serum response factor (SRF). Involved in the negative regulation of ciliogenesis. The sequence is that of Serine/threonine-protein kinase N2 (Pkn2) from Mus musculus (Mouse).